A 517-amino-acid chain; its full sequence is Ribonuclease Y (517 aa).

Residues 1–21 (MIEVLIGLGAGVAGVGAGYLY) traverse the membrane as a helical segment. The KH domain maps to 207-273 (LINVVNIKND…TRVIELLVED (67 aa)). Residues 333–426 (ALAHSLEVAH…VCAADCLSAA (94 aa)) enclose the HD domain.

The protein belongs to the RNase Y family.

The protein resides in the cell membrane. Functionally, endoribonuclease that initiates mRNA decay. The protein is Ribonuclease Y of Campylobacter curvus (strain 525.92).